A 227-amino-acid chain; its full sequence is Ribosomal RNA small subunit methyltransferase G (227 aa).

Residues Gly74, Leu79, 124–125, and Arg142 contribute to the S-adenosyl-L-methionine site; that span reads AE.

The protein belongs to the methyltransferase superfamily. RNA methyltransferase RsmG family.

The protein resides in the cytoplasm. Specifically methylates the N7 position of guanine in position 518 of 16S rRNA. This Mycolicibacterium gilvum (strain PYR-GCK) (Mycobacterium gilvum (strain PYR-GCK)) protein is Ribosomal RNA small subunit methyltransferase G.